The following is a 413-amino-acid chain: Divalent metal cation transporter MntH (413 aa).

Helical transmembrane passes span leucine 19–alanine 39, alanine 46–isoleucine 66, valine 94–isoleucine 114, leucine 122–isoleucine 142, valine 156–glutamine 176, alanine 196–histidine 216, isoleucine 241–phenylalanine 261, isoleucine 290–glycine 310, alanine 329–leucine 349, valine 350–phenylalanine 370, and valine 392–valine 412.

It belongs to the NRAMP family.

The protein localises to the cell inner membrane. H(+)-stimulated, divalent metal cation uptake system. This Klebsiella pneumoniae (strain 342) protein is Divalent metal cation transporter MntH.